A 356-amino-acid polypeptide reads, in one-letter code: Probable dual-specificity RNA methyltransferase RlmN (356 aa).

The active-site Proton acceptor is glutamate 100. The region spanning 106 to 340 is the Radical SAM core domain; sequence TQQRLTVCLS…VSLRASRGLD (235 aa). An intrachain disulfide couples cysteine 113 to cysteine 345. Cysteine 120, cysteine 124, and cysteine 127 together coordinate [4Fe-4S] cluster. S-adenosyl-L-methionine contacts are provided by residues 167-168, serine 197, 226-228, and asparagine 302; these read GE and SLH. The active-site S-methylcysteine intermediate is cysteine 345.

Belongs to the radical SAM superfamily. RlmN family. The cofactor is [4Fe-4S] cluster.

It is found in the cytoplasm. It carries out the reaction adenosine(2503) in 23S rRNA + 2 reduced [2Fe-2S]-[ferredoxin] + 2 S-adenosyl-L-methionine = 2-methyladenosine(2503) in 23S rRNA + 5'-deoxyadenosine + L-methionine + 2 oxidized [2Fe-2S]-[ferredoxin] + S-adenosyl-L-homocysteine. The enzyme catalyses adenosine(37) in tRNA + 2 reduced [2Fe-2S]-[ferredoxin] + 2 S-adenosyl-L-methionine = 2-methyladenosine(37) in tRNA + 5'-deoxyadenosine + L-methionine + 2 oxidized [2Fe-2S]-[ferredoxin] + S-adenosyl-L-homocysteine. In terms of biological role, specifically methylates position 2 of adenine 2503 in 23S rRNA and position 2 of adenine 37 in tRNAs. The sequence is that of Probable dual-specificity RNA methyltransferase RlmN from Prochlorococcus marinus (strain MIT 9303).